Here is a 194-residue protein sequence, read N- to C-terminus: Metalloproteinase inhibitor 2 (194 aa).

Cys-1 is a Zn(2+) binding site. Involved in metalloproteinase-binding regions lie at residues 1–4 (CSCS) and 69–70 (SA). 6 disulfides stabilise this stretch: Cys-1–Cys-72, Cys-3–Cys-101, Cys-13–Cys-126, Cys-128–Cys-175, Cys-133–Cys-138, and Cys-146–Cys-167. The region spanning 1-126 (CSCSPVHPQQ…SLNHRYQMGC (126 aa)) is the NTR domain.

Belongs to the protease inhibitor I35 (TIMP) family. As to quaternary structure, interacts (via the C-terminal) with MMP2 (via the C-terminal PEX domain); the interaction inhibits the MMP2 activity. In terms of processing, the activity of TIMP2 is dependent on the presence of disulfide bonds.

The protein resides in the secreted. Complexes with metalloproteinases (such as collagenases) and irreversibly inactivates them by binding to their catalytic zinc cofactor. This chain is Metalloproteinase inhibitor 2 (TIMP2), found in Oryctolagus cuniculus (Rabbit).